A 578-amino-acid chain; its full sequence is Asparagine synthetase [glutamine-hydrolyzing] 2 (578 aa).

C2 serves as the catalytic For GATase activity. One can recognise a Glutamine amidotransferase type-2 domain in the interval C2–G185. L-glutamine-binding positions include R50–I54, N75–E77, and D98. In terms of domain architecture, Asparagine synthetase spans L210–K450. Residues L231, I267, and S341–G342 contribute to the ATP site.

As to expression, expressed in the vascular region adjacent to leaf mesophyll cells in the companion cell-sieve tube element complex.

The catalysed reaction is L-aspartate + L-glutamine + ATP + H2O = L-asparagine + L-glutamate + AMP + diphosphate + H(+). Its pathway is amino-acid biosynthesis; L-asparagine biosynthesis. In terms of biological role, essential for nitrogen assimilation, distribution and remobilization within the plant via the phloem. The protein is Asparagine synthetase [glutamine-hydrolyzing] 2 (ASN2) of Arabidopsis thaliana (Mouse-ear cress).